The chain runs to 407 residues: Peptidase T (407 aa).

H81 lines the Zn(2+) pocket. Residue D83 is part of the active site. Residue D142 coordinates Zn(2+). E176 (proton acceptor) is an active-site residue. Zn(2+) contacts are provided by E177, D199, and H381.

It belongs to the peptidase M20B family. It depends on Zn(2+) as a cofactor.

It localises to the cytoplasm. It carries out the reaction Release of the N-terminal residue from a tripeptide.. In terms of biological role, cleaves the N-terminal amino acid of tripeptides. This chain is Peptidase T, found in Streptococcus pneumoniae (strain P1031).